A 680-amino-acid chain; its full sequence is Putative E3 ubiquitin-protein ligase UNKL (680 aa).

The interval 1 to 22 (MPSVSKAAAAALSGSPPQTEKP) is disordered. 4 C3H1-type zinc fingers span residues 75–104 (YSPDVYCSKYNEATGVCPDGDECPYLHRTT), 115–145 (YYKTGTCIHETDARGHCVKNGLHCAFAHGPL), 243–277 (QYRSTPCPSVKHGDEWGEPSRCDGGDGCQYCHSRT), and 283–310 (PESTKCNDMRQTGYCPRGPFCAFAHVEK). 4 stretches are compositionally biased toward low complexity: residues 326–337 (TSPSSTGSGQPG), 375–396 (VSSSVASSLASSAGSGSSSPTA), 465–497 (SLPRAPSLHSPSSASTSPLGSLSQPLPGPVGSS), and 545–562 (SPSPILSAGPPSSSSASP). 4 disordered regions span residues 326 to 358 (TSPSSTGSGQPGNAKRRDSPAEGGPRGSEQDSK), 375 to 400 (VSSSVASSLASSAGSGSSSPTALPAP), 442 to 520 (DGHD…SAAS), and 545 to 566 (SPSPILSAGPPSSSSASPNGAE). Residues 563 to 619 (NGAELARVRRQLDEAKRKIRQWEESWQQVKQVCDAWQREAQEAKERARVADSDRQLA) adopt a coiled-coil conformation. The RING-type zinc finger occupies 639-674 (CVACRERAHGAVLRPCQHHILCEPCAATAPECPYCK).

This sequence belongs to the unkempt family. Isoform 4 (C-terminal) interacts with the GTP-bound form of RAC1. Isoform 4 (C-terminal) interacts with SMARCD2/BAF60b. Isoform 4 is ubiquitinated in the C-terminal. Ubiquitination is enhanced by activated RAC1. The presence of the RING finger domain is not essential for ubiquitination to occur.

Its subcellular location is the cytoplasm. The protein localises to the nucleus. The protein operates within protein modification; protein ubiquitination. In terms of biological role, may participate in a protein complex showing an E3 ligase activity regulated by RAC1. Ubiquitination is directed towards itself and possibly other substrates, such as SMARCD2/BAF60b. Intrinsic E3 ligase activity has not been proven. This is Putative E3 ubiquitin-protein ligase UNKL (UNKL) from Homo sapiens (Human).